A 228-amino-acid chain; its full sequence is Phosphoribosylformylglycinamidine synthase subunit PurQ (228 aa).

Residues 4–226 (AVVVFPGSNC…VNYWRETHVV (223 aa)) form the Glutamine amidotransferase type-1 domain. The active-site Nucleophile is the Cys86. Catalysis depends on residues His195 and Glu197.

In terms of assembly, part of the FGAM synthase complex composed of 1 PurL, 1 PurQ and 2 PurS subunits.

The protein localises to the cytoplasm. It catalyses the reaction N(2)-formyl-N(1)-(5-phospho-beta-D-ribosyl)glycinamide + L-glutamine + ATP + H2O = 2-formamido-N(1)-(5-O-phospho-beta-D-ribosyl)acetamidine + L-glutamate + ADP + phosphate + H(+). It carries out the reaction L-glutamine + H2O = L-glutamate + NH4(+). Its pathway is purine metabolism; IMP biosynthesis via de novo pathway; 5-amino-1-(5-phospho-D-ribosyl)imidazole from N(2)-formyl-N(1)-(5-phospho-D-ribosyl)glycinamide: step 1/2. Part of the phosphoribosylformylglycinamidine synthase complex involved in the purines biosynthetic pathway. Catalyzes the ATP-dependent conversion of formylglycinamide ribonucleotide (FGAR) and glutamine to yield formylglycinamidine ribonucleotide (FGAM) and glutamate. The FGAM synthase complex is composed of three subunits. PurQ produces an ammonia molecule by converting glutamine to glutamate. PurL transfers the ammonia molecule to FGAR to form FGAM in an ATP-dependent manner. PurS interacts with PurQ and PurL and is thought to assist in the transfer of the ammonia molecule from PurQ to PurL. This chain is Phosphoribosylformylglycinamidine synthase subunit PurQ, found in Geobacillus kaustophilus (strain HTA426).